A 317-amino-acid chain; its full sequence is Probable cell division protein WhiA (317 aa).

A DNA-binding region (H-T-H motif) is located at residues S275 to E308.

Belongs to the WhiA family.

Functionally, involved in cell division and chromosome segregation. In Desulfitobacterium hafniense (strain DSM 10664 / DCB-2), this protein is Probable cell division protein WhiA.